The primary structure comprises 374 residues: Heat stress transcription factor A-8 (374 aa).

A DNA-binding region spans residues 17-112 (VAPFLRKCYD…LLKNVIRRKN (96 aa)). The interval 126–192 (TTYAQEKSGL…EMLSFLVMVM (67 aa)) is hydrophobic repeat HR-A/B. The AHA1 motif lies at 285–294 (DGAWEKLLLL). The Nuclear localization signal motif lies at 298-303 (RKKTKK). The AHA2 signature appears at 330–339 (KSYMLKLISE). A Nuclear export signal motif is present at residues 363–370 (LTEQMELL).

This sequence belongs to the HSF family. Class A subfamily. As to quaternary structure, homotrimer. Post-translationally, exhibits temperature-dependent phosphorylation.

It is found in the cytoplasm. It localises to the nucleus. In terms of biological role, transcriptional activator that specifically binds DNA sequence 5'-AGAAnnTTCT-3' known as heat shock promoter elements (HSE). This Arabidopsis thaliana (Mouse-ear cress) protein is Heat stress transcription factor A-8 (HSFA8).